Here is a 144-residue protein sequence, read N- to C-terminus: UPF0547 protein C16orf87 homolog (144 aa).

Residues 33 to 112 (HAKQSQRLPP…EEKEKQEKEV (80 aa)) are disordered. The segment covering 35-45 (KQSQRLPPTSE) has biased composition (polar residues). The segment covering 50–62 (PKRRRTERIKRER) has biased composition (basic residues). Basic and acidic residues-rich tracts occupy residues 63 to 74 (IHTAVNRDLENR) and 99 to 112 (KKHEEEKEKQEKEV). A coiled-coil region spans residues 94-122 (KTATTKKHEEEKEKQEKEVDMYANLSDEK).

This sequence belongs to the UPF0547 family.

This chain is UPF0547 protein C16orf87 homolog, found in Xenopus laevis (African clawed frog).